The primary structure comprises 103 residues: Large ribosomal subunit protein eL21 (103 aa).

This sequence belongs to the eukaryotic ribosomal protein eL21 family.

The sequence is that of Large ribosomal subunit protein eL21 from Sulfurisphaera tokodaii (strain DSM 16993 / JCM 10545 / NBRC 100140 / 7) (Sulfolobus tokodaii).